The sequence spans 298 residues: Tyrosine recombinase XerC (298 aa).

One can recognise a Core-binding (CB) domain in the interval 2 to 88; that stretch reads TDLHTDVERY…ALRSFFDWLV (87 aa). Positions 109–288 constitute a Tyr recombinase domain; the sequence is HLPKNIDVDD…DFQHLASVYD (180 aa). Active-site residues include Arg148, Lys172, His240, Arg243, and His266. The O-(3'-phospho-DNA)-tyrosine intermediate role is filled by Tyr275.

This sequence belongs to the 'phage' integrase family. XerC subfamily. In terms of assembly, forms a cyclic heterotetrameric complex composed of two molecules of XerC and two molecules of XerD, in which XerC interacts with XerD via its C-terminal region, XerD interacts with XerC via its C-terminal region and so on.

It localises to the cytoplasm. With respect to regulation, ftsK may regulate the catalytic switch between XerC and XerD in the heterotetrameric complex during the two steps of the recombination process. Its function is as follows. Site-specific tyrosine recombinase, which acts by catalyzing the cutting and rejoining of the recombining DNA molecules. Binds cooperatively to specific DNA consensus sequences that are separated from XerD binding sites by a short central region, forming the heterotetrameric XerC-XerD complex that recombines DNA substrates. The complex is essential to convert dimers of the bacterial chromosome into monomers to permit their segregation at cell division. It also contributes to the segregational stability of plasmids. In the complex XerC specifically exchanges the top DNA strands. This chain is Tyrosine recombinase XerC, found in Escherichia coli O139:H28 (strain E24377A / ETEC).